The sequence spans 264 residues: tRNA (guanine-N(7)-)-methyltransferase (264 aa).

The tract at residues M1–P39 is disordered. The span at T18 to A31 shows a compositional bias: low complexity. The S-adenosyl-L-methionine site is built by E94, E119, D146, and D169. Residue D169 is part of the active site. Residues K173, D205, and T240 to E243 each bind substrate.

This sequence belongs to the class I-like SAM-binding methyltransferase superfamily. TrmB family.

The catalysed reaction is guanosine(46) in tRNA + S-adenosyl-L-methionine = N(7)-methylguanosine(46) in tRNA + S-adenosyl-L-homocysteine. Its pathway is tRNA modification; N(7)-methylguanine-tRNA biosynthesis. Functionally, catalyzes the formation of N(7)-methylguanine at position 46 (m7G46) in tRNA. The polypeptide is tRNA (guanine-N(7)-)-methyltransferase (Burkholderia mallei (strain ATCC 23344)).